A 167-amino-acid polypeptide reads, in one-letter code: Thioredoxin Y2, chloroplastic (167 aa).

A chloroplast-targeting transit peptide spans Met-1–Arg-58. One can recognise a Thioredoxin domain in the interval Ala-59–Gln-164. Catalysis depends on nucleophile residues Cys-88 and Cys-91. Residues Cys-88 and Cys-91 are joined by a disulfide bond.

The protein belongs to the thioredoxin family. Plant Y-type subfamily. As to expression, expressed in leaves.

The protein localises to the plastid. It is found in the chloroplast stroma. Functionally, thiol-disulfide oxidoreductase that poorly activates chloroplastic malate dehydrogenase (NADP-MDH) and fructose-1,6-bisphosphatase. Provides reducing equivalents for peroxiredoxin Q. The chain is Thioredoxin Y2, chloroplastic from Arabidopsis thaliana (Mouse-ear cress).